The sequence spans 656 residues: Translation factor GUF1 homolog, mitochondrial (656 aa).

Residues 1-29 (MLAVRRRGLRVLAVAPLRVRGLATTSTEF) constitute a mitochondrion transit peptide. Residues 54 to 238 (ERIRNFSIVA…AVVERLPPPV (185 aa)) form the tr-type G domain. GTP-binding positions include 63 to 70 (AHIDHGKS), 131 to 135 (DTPGH), and 185 to 188 (TKID).

Belongs to the TRAFAC class translation factor GTPase superfamily. Classic translation factor GTPase family. LepA subfamily.

The protein resides in the mitochondrion inner membrane. The catalysed reaction is GTP + H2O = GDP + phosphate + H(+). Promotes mitochondrial protein synthesis. May act as a fidelity factor of the translation reaction, by catalyzing a one-codon backward translocation of tRNAs on improperly translocated ribosomes. Binds to mitochondrial ribosomes in a GTP-dependent manner. This chain is Translation factor GUF1 homolog, mitochondrial, found in Phytophthora infestans (strain T30-4) (Potato late blight agent).